Here is a 464-residue protein sequence, read N- to C-terminus: Zinc transporter 6 (464 aa).

At 1-33 (MGTIYLFRKTQRSLLGKLTQEFRLVTADRRSWK) the chain is on the cytoplasmic side. A helical membrane pass occupies residues 34–54 (ILLFGAINVVCTGFLLTWCSS). Over 55-64 (TNSMALTAYT) the chain is Extracellular. Residues 65 to 85 (YLTIFDLFSLITCLISYWVMM) form a helical membrane-spanning segment. Residues 86 to 98 (KKPSPTYSFGFER) lie on the Cytoplasmic side of the membrane. Residues 99-119 (FEVLSVFASTVLAQLGALFIL) traverse the membrane as a helical segment. Over 120–134 (KESAERFVEQPEIHT) the chain is Extracellular. Residues 135–155 (GRLLVGTFVALCFNLFSMLSI) form a helical membrane-spanning segment. At 156–200 (RNKPFAYVSEAASTSWLQEHVADLSRSLCGIIPGLSSIFLPRMNP) the chain is on the cytoplasmic side. Residues 201–221 (FVLIDIAGALALCITYMLIEI) traverse the membrane as a helical segment. The Extracellular segment spans residues 222–228 (NNYFAVD). The chain crosses the membrane as a helical span at residues 229–249 (TASAIAIAVMTFGTMYPMSVY). Topologically, residues 250-464 (SGKVLLQTTP…TPGQFTQFKQ (215 aa)) are cytoplasmic.

This sequence belongs to the cation diffusion facilitator (CDF) transporter (TC 2.A.4) family. SLC30A subfamily. In terms of assembly, heterodimer with SLC30A5; form a functional zinc ion transmembrane transporter.

Its subcellular location is the golgi apparatus. It localises to the trans-Golgi network membrane. Functionally, has probably no intrinsic transporter activity but together with SLC30A5 forms a functional zinc ion:proton antiporter heterodimer, mediating zinc entry into the lumen of organelles along the secretory pathway. As part of that zinc ion:proton antiporter, contributes to zinc ion homeostasis within the early secretory pathway and regulates the activation and folding of enzymes like alkaline phosphatases and enzymes involved in phosphatidylinositol glycan anchor biosynthesis. The sequence is that of Zinc transporter 6 (slc30a6) from Xenopus tropicalis (Western clawed frog).